Reading from the N-terminus, the 63-residue chain is Large ribosomal subunit protein uL29 (63 aa).

The protein belongs to the universal ribosomal protein uL29 family.

The protein is Large ribosomal subunit protein uL29 of Sodalis glossinidius (strain morsitans).